Reading from the N-terminus, the 839-residue chain is ABC transporter A family member 7 (839 aa).

7 consecutive transmembrane segments (helical) span residues 30–50, 238–258, 286–306, 321–341, 352–372, 378–398, and 419–439; these read GVQI…KLWI, IASL…LPLF, IMTF…ISLI, FALF…AFFL, SIFG…LSLF, VFYY…LCGL, and ILFW…YLDK. In terms of domain architecture, ABC transporter spans 525 to 756; that stretch reads LIVQGLRKQF…FGDGYSVRID (232 aa). 559–566 contacts ATP; sequence GPNGAGKT.

The protein belongs to the ABC transporter superfamily. ABCA family.

The protein resides in the membrane. The chain is ABC transporter A family member 7 (abcA7) from Dictyostelium discoideum (Social amoeba).